The sequence spans 37 residues: Desulforedoxin (37 aa).

Fe cation is bound by residues C10, C13, C29, and C30.

It to the N-terminal section of desulfoferrodoxin. As to quaternary structure, homodimer. It depends on Fe cation as a cofactor.

Its function is as follows. Nonheme iron protein possibly involved in electron transport. The polypeptide is Desulforedoxin (dsr) (Megalodesulfovibrio gigas (Desulfovibrio gigas)).